Here is a 309-residue protein sequence, read N- to C-terminus: Taste receptor type 2 member 46 (309 aa).

Residue Met1 is a topological domain, extracellular. A helical membrane pass occupies residues 2-22; that stretch reads ITFLPIIFSILIVVTFVIGNF. The Cytoplasmic portion of the chain corresponds to 23–46; it reads ANGFIALANSIEWFKRQKISFADQ. The helical transmembrane segment at 47–67 threads the bilayer; sequence ILTALAVSRVGLLWVLLLNWY. At 68–86 the chain is on the extracellular side; it reads ATELNPAFYSIEVRITAYN. The helical transmembrane segment at 87-107 threads the bilayer; that stretch reads LWAVINHFSNWLATSLSIFYL. The Cytoplasmic portion of the chain corresponds to 108-126; sequence LKIANFSNLIFLRLKRRVK. Residues 127-147 form a helical membrane-spanning segment; sequence SVVLVILLGPLLFLVCHLFVI. The Extracellular segment spans residues 148–178; that stretch reads NMNQIIWTKEYEGNMTWKIKLRSAMYLSNIT. N-linked (GlcNAc...) asparagine glycosylation is found at Asn161 and Asn176. The helical transmembrane segment at 179–199 threads the bilayer; the sequence is VTILANLVPFTLTLISFLLLI. The Cytoplasmic portion of the chain corresponds to 200 to 229; the sequence is CSLCKHLKKMQLHGKGSQDPSMKVHIKALQ. Residues 230-250 form a helical membrane-spanning segment; the sequence is TVTSFLLLCAIYFLSIIMSVW. Residues 251-259 lie on the Extracellular side of the membrane; the sequence is SFESLENKP. A helical transmembrane segment spans residues 260-280; sequence VFMFCEAITFSYPSTHPFILI. At 281–309 the chain is on the cytoplasmic side; sequence WGNKKLKQTFLSVLWHVRYWVKGEEPSSP.

It belongs to the G-protein coupled receptor T2R family.

It is found in the membrane. Its subcellular location is the cell projection. The protein resides in the cilium membrane. In terms of biological role, receptor that may play a role in the perception of bitterness and is gustducin-linked. May play a role in sensing the chemical composition of the gastrointestinal content. The activity of this receptor may stimulate alpha gustducin, mediate PLC-beta-2 activation and lead to the gating of TRPM5. In airway epithelial cells, binding of bitter compounds increases the intracellular calcium ion concentration and stimulates ciliary beat frequency. The sequence is that of Taste receptor type 2 member 46 (TAS2R46) from Pan paniscus (Pygmy chimpanzee).